A 258-amino-acid chain; its full sequence is Acetylglutamate kinase (258 aa).

Substrate contacts are provided by residues 44 to 45 (GG), Arg-66, and Asn-158. Residues 181 to 186 (DVSGIL) and 209 to 211 (IIT) each bind ATP.

Belongs to the acetylglutamate kinase family. ArgB subfamily. Homodimer.

The protein resides in the cytoplasm. It carries out the reaction N-acetyl-L-glutamate + ATP = N-acetyl-L-glutamyl 5-phosphate + ADP. It functions in the pathway amino-acid biosynthesis; L-arginine biosynthesis; N(2)-acetyl-L-ornithine from L-glutamate: step 2/4. Functionally, catalyzes the ATP-dependent phosphorylation of N-acetyl-L-glutamate. In Salmonella paratyphi A (strain ATCC 9150 / SARB42), this protein is Acetylglutamate kinase.